The following is a 736-amino-acid chain: Elongation factor 2 (736 aa).

The 244-residue stretch at 19–262 (DQIRNIGIIA…MVIKFVPNPR (244 aa)) folds into the tr-type G domain. GTP is bound by residues 28–35 (AHVDHGKT), 94–98 (DTPGH), and 148–151 (NKVD). At His-602 the chain carries Diphthamide.

It belongs to the TRAFAC class translation factor GTPase superfamily. Classic translation factor GTPase family. EF-G/EF-2 subfamily.

It localises to the cytoplasm. Its function is as follows. Catalyzes the GTP-dependent ribosomal translocation step during translation elongation. During this step, the ribosome changes from the pre-translocational (PRE) to the post-translocational (POST) state as the newly formed A-site-bound peptidyl-tRNA and P-site-bound deacylated tRNA move to the P and E sites, respectively. Catalyzes the coordinated movement of the two tRNA molecules, the mRNA and conformational changes in the ribosome. The sequence is that of Elongation factor 2 (fusA) from Aeropyrum pernix (strain ATCC 700893 / DSM 11879 / JCM 9820 / NBRC 100138 / K1).